The following is a 463-amino-acid chain: Phosphoglycerate transporter protein (463 aa).

Topologically, residues 1–29 (MLTILKTGQSAHKVPPEKVQATYGRYRIQ) are cytoplasmic. Transmembrane regions (helical) follow at residues 30 to 50 (ALLS…NFTL), 59 to 79 (LDLS…AYGI), 106 to 126 (IVNV…LVVF), 127 to 147 (NGLF…NWFP), 160 to 180 (ISHN…FAIL), 188 to 208 (ASYI…LVLG), 267 to 287 (VFVY…LLTV), 297 to 317 (VAFL…GWLS), 326 to 346 (MPLA…YWKS), 349 to 369 (LLMV…PQFL), 391 to 411 (GFMS…VMVD), and 413 to 433 (LGWY…ILFC).

The protein belongs to the major facilitator superfamily. Organophosphate:Pi antiporter (OPA) (TC 2.A.1.4) family.

It localises to the cell inner membrane. In terms of biological role, the phosphoglycerate transporter protein is a part of the PGT transport system. It is the membrane bound transporter for phosphoglycerate into salmonella. The chain is Phosphoglycerate transporter protein (pgtP) from Salmonella typhimurium (strain LT2 / SGSC1412 / ATCC 700720).